Consider the following 244-residue polypeptide: MKIDLNADLGEGCASDAELLTLVSSANIACGFHAGDAQTMQACVREAIKNGVAIGAHPSFPDRENFGRSAMQLPPETVFAQTLYQIGALAAITRAQGGVMCHVKPHGMLYNQAAKEAQLADAIARAVYACDPALILVGLAGSELIRAGERYGLVTREEVFADRGYQADGSLVPRSQPGALIENEEQALAQTLEMVQYGRVKSITGEWAMVTAQTVCLHGDGEHALAFARRLRATFAEKGIVVAA.

It belongs to the LamB/PxpA family. In terms of assembly, forms a complex composed of PxpA, PxpB and PxpC.

It carries out the reaction 5-oxo-L-proline + ATP + 2 H2O = L-glutamate + ADP + phosphate + H(+). Catalyzes the cleavage of 5-oxoproline to form L-glutamate coupled to the hydrolysis of ATP to ADP and inorganic phosphate. This Escherichia coli O6:K15:H31 (strain 536 / UPEC) protein is 5-oxoprolinase subunit A.